The chain runs to 753 residues: Catalase-peroxidase (753 aa).

The segment at residues 90-238 is a cross-link (tryptophyl-tyrosyl-methioninium (Trp-Tyr) (with M-264)); sequence WHSAGTYRVT…LASSHMGLIY (149 aa). The Proton acceptor role is filled by His-91. The interval 196–220 is disordered; sequence SEGQEGHEGHGVVQGDESKKQHTDI. A cross-link (tryptophyl-tyrosyl-methioninium (Tyr-Met) (with W-90)) is located at residues 238–264; the sequence is YVNPEGPDGIPDPVASAKDIRVTFGRM. His-279 lines the heme b pocket.

This sequence belongs to the peroxidase family. Peroxidase/catalase subfamily. As to quaternary structure, homodimer or homotetramer. Heme b is required as a cofactor. Formation of the three residue Trp-Tyr-Met cross-link is important for the catalase, but not the peroxidase activity of the enzyme.

Its subcellular location is the cytoplasm. The catalysed reaction is H2O2 + AH2 = A + 2 H2O. It catalyses the reaction 2 H2O2 = O2 + 2 H2O. With respect to regulation, inhibited by KCN. Functionally, bifunctional enzyme with both catalase and broad-spectrum peroxidase activity. The chain is Catalase-peroxidase from Neurospora crassa (strain ATCC 24698 / 74-OR23-1A / CBS 708.71 / DSM 1257 / FGSC 987).